The sequence spans 768 residues: Actin filament-associated protein 1-like 1 (768 aa).

Positions 83–145 (LRDMSDDGEP…GKSPEYISSH (63 aa)) are disordered. A phosphoserine mark is found at S87, S93, S97, S103, and S153. A compositionally biased stretch (polar residues) spans 165–185 (SYPTTRMNGELKNSYNDSDAM). Residues 165–211 (SYPTTRMNGELKNSYNDSDAMSSSYESYDEEEEEEKGRQPKHQWPSE) form a disordered region. A PH 1 domain is found at 220 to 316 (DCRICAFLLR…WLKVIREVSR (97 aa)). Phosphoserine is present on residues S329 and S343. Positions 340–349 (KRLSQEKQNS) are enriched in basic and acidic residues. Residues 340–382 (KRLSQEKQNSDSDSLGMNDSGSTLGRREACEHGKGKKNSLAEL) form a disordered region. The span at 350–362 (DSDSLGMNDSGST) shows a compositional bias: polar residues. A PH 2 domain is found at 418–512 (EVPCCGYLNV…WLGLLLVEMG (95 aa)). Residue Y557 is modified to Phosphotyrosine. Positions 564–609 (KVQDEEPQRPTGAQVKRHASSCSEKSHRADPQVKVKRHASSANQYK) are disordered. Basic and acidic residues predominate over residues 587-596 (EKSHRADPQV). A coiled-coil region spans residues 611–701 (GKNRAEEDAR…AVKERLQQSL (91 aa)). The interval 705 to 768 (PALGLSVSNK…KAKEWEMKKT (64 aa)) is disordered. Polar residues predominate over residues 710 to 734 (SVSNKNKSQDTTNKPQSNAPEQSLP). S747 is modified (phosphoserine). Basic and acidic residues predominate over residues 759-768 (KAKEWEMKKT).

In terms of assembly, interacts with CTTN.

Its subcellular location is the cytoplasm. The protein resides in the cell projection. It localises to the podosome. The protein localises to the invadopodium. It is found in the cytoskeleton. Its subcellular location is the stress fiber. Functionally, may be involved in podosome and invadosome formation. This Mus musculus (Mouse) protein is Actin filament-associated protein 1-like 1 (Afap1l1).